The sequence spans 99 residues: Small ribosomal subunit protein uS14m (99 aa).

The protein belongs to the universal ribosomal protein uS14 family.

It is found in the mitochondrion. The polypeptide is Small ribosomal subunit protein uS14m (RPS14) (Marchantia polymorpha (Common liverwort)).